We begin with the raw amino-acid sequence, 144 residues long: Large ribosomal subunit protein uL15 (144 aa).

Residues 1-52 (MRLNSLSPAEGAKHSAKRLGRGISSGLGKTGGRGHKGQKSRTGGGVRRGFEG) are disordered.

The protein belongs to the universal ribosomal protein uL15 family. Part of the 50S ribosomal subunit.

Binds to the 23S rRNA. This is Large ribosomal subunit protein uL15 from Actinobacillus pleuropneumoniae serotype 7 (strain AP76).